The chain runs to 99 residues: Aspartyl/glutamyl-tRNA(Asn/Gln) amidotransferase subunit C (99 aa).

This sequence belongs to the GatC family. Heterotrimer of A, B and C subunits.

The enzyme catalyses L-glutamyl-tRNA(Gln) + L-glutamine + ATP + H2O = L-glutaminyl-tRNA(Gln) + L-glutamate + ADP + phosphate + H(+). It carries out the reaction L-aspartyl-tRNA(Asn) + L-glutamine + ATP + H2O = L-asparaginyl-tRNA(Asn) + L-glutamate + ADP + phosphate + 2 H(+). Its function is as follows. Allows the formation of correctly charged Asn-tRNA(Asn) or Gln-tRNA(Gln) through the transamidation of misacylated Asp-tRNA(Asn) or Glu-tRNA(Gln) in organisms which lack either or both of asparaginyl-tRNA or glutaminyl-tRNA synthetases. The reaction takes place in the presence of glutamine and ATP through an activated phospho-Asp-tRNA(Asn) or phospho-Glu-tRNA(Gln). The protein is Aspartyl/glutamyl-tRNA(Asn/Gln) amidotransferase subunit C of Mycolicibacterium vanbaalenii (strain DSM 7251 / JCM 13017 / BCRC 16820 / KCTC 9966 / NRRL B-24157 / PYR-1) (Mycobacterium vanbaalenii).